The sequence spans 425 residues: Histidine--tRNA ligase (425 aa).

This sequence belongs to the class-II aminoacyl-tRNA synthetase family. As to quaternary structure, homodimer.

The protein localises to the cytoplasm. It catalyses the reaction tRNA(His) + L-histidine + ATP = L-histidyl-tRNA(His) + AMP + diphosphate + H(+). This is Histidine--tRNA ligase from Streptococcus uberis (strain ATCC BAA-854 / 0140J).